The following is a 585-amino-acid chain: Probable multidrug resistance ABC transporter ATP-binding/permease protein YheI (585 aa).

The 286-residue stretch at 19-304 (YTIAIVLLLA…IGELINVMQR (286 aa)) folds into the ABC transmembrane type-1 domain. A run of 6 helical transmembrane segments spans residues 21–41 (IAIV…KLLG), 57–77 (LLFY…MSYF), 127–147 (AVSL…MFMM), 149–169 (IFLT…IIPL), 249–269 (VKLL…FLVF), and 279–299 (VSFN…GELI). In terms of domain architecture, ABC transporter spans 337–572 (IVFSHVSFTY…NGWYREQYER (236 aa)). Residue 371–378 (GKTGSGKT) coordinates ATP.

The protein belongs to the ABC transporter superfamily. In terms of assembly, heterodimer composed of YheH and YheI.

It localises to the cell membrane. With respect to regulation, inhibited by ortho-vanadate. Involved in the transport of four structurally unrelated drugs, including doxorubicin and mitoxantrone. Transmembrane domains (TMD) form a pore in the membrane and the ATP-binding domain (NBD) is responsible for energy generation. This Bacillus subtilis (strain 168) protein is Probable multidrug resistance ABC transporter ATP-binding/permease protein YheI (yheI).